A 910-amino-acid chain; its full sequence is Myelin regulatory factor-like protein (910 aa).

Positions 142 to 405 (GCSYPQQPLC…SNPGQFENDS (264 aa)) form a DNA-binding region, NDT80. The segment at 189 to 208 (RSRSSEVQDPDSEGQNRMPT) is disordered. The Peptidase S74 domain maps to 451–559 (SDSRAKQNIQ…KLTNNLEERI (109 aa)). Residues 543 to 575 (GAVKQLCKLTNNLEERIEELEIWNRKLARLKRL) are a coiled coil. A helical transmembrane segment spans residues 628–648 (LVITLIAVMAFCALTIVALYI). Positions 661–682 (LPPSNITSSQEPALLPTASSSA) are disordered. Over residues 663 to 682 (PSNITSSQEPALLPTASSSA) the composition is skewed to polar residues.

This sequence belongs to the MRF family.

The protein resides in the membrane. This chain is Myelin regulatory factor-like protein (MYRFL), found in Homo sapiens (Human).